A 143-amino-acid chain; its full sequence is Large ribosomal subunit protein uL13 (143 aa).

The protein belongs to the universal ribosomal protein uL13 family. As to quaternary structure, part of the 50S ribosomal subunit.

Functionally, this protein is one of the early assembly proteins of the 50S ribosomal subunit, although it is not seen to bind rRNA by itself. It is important during the early stages of 50S assembly. In Finegoldia magna (strain ATCC 29328 / DSM 20472 / WAL 2508) (Peptostreptococcus magnus), this protein is Large ribosomal subunit protein uL13.